We begin with the raw amino-acid sequence, 549 residues long: Teichoic acids export ATP-binding protein TagH (549 aa).

In terms of domain architecture, ABC transporter spans D22–Q243. G57–S64 is an ATP binding site. Positions M244–K549 are unknown. One can recognise an SH3b domain in the interval A346–K415.

It belongs to the ABC transporter superfamily. Teichoic acids exporter (TC 3.A.1.104.1) family. The complex is composed of two ATP-binding proteins (TagH) and two transmembrane proteins (TagG).

The protein resides in the cell membrane. The enzyme catalyses ATP + H2O + teichoic acidSide 1 = ADP + phosphate + teichoic acidSide 2.. In terms of biological role, part of the ABC transporter complex TagGH involved in teichoic acids export. Responsible for energy coupling to the transport system. This chain is Teichoic acids export ATP-binding protein TagH, found in Bacillus anthracis.